We begin with the raw amino-acid sequence, 288 residues long: Quinate/shikimate dehydrogenase (288 aa).

2 residues coordinate substrate: K71 and D107. Residues 132 to 135 (AGGA), 155 to 158 (NRRD), K205, 232 to 235 (CVYN), and G255 contribute to the NAD(+) site.

The protein belongs to the shikimate dehydrogenase family. In terms of assembly, homodimer.

It catalyses the reaction L-quinate + NAD(+) = 3-dehydroquinate + NADH + H(+). The enzyme catalyses L-quinate + NADP(+) = 3-dehydroquinate + NADPH + H(+). The catalysed reaction is shikimate + NADP(+) = 3-dehydroshikimate + NADPH + H(+). It carries out the reaction shikimate + NAD(+) = 3-dehydroshikimate + NADH + H(+). The protein operates within metabolic intermediate biosynthesis; chorismate biosynthesis; chorismate from D-erythrose 4-phosphate and phosphoenolpyruvate: step 4/7. Functionally, the actual biological function of YdiB remains unclear, nor is it known whether 3-dehydroshikimate or quinate represents the natural substrate. Catalyzes the reversible NAD-dependent reduction of both 3-dehydroshikimate (DHSA) and 3-dehydroquinate to yield shikimate (SA) and quinate, respectively. It can use both NAD or NADP for catalysis, however it has higher catalytic efficiency with NAD. This chain is Quinate/shikimate dehydrogenase, found in Shigella flexneri.